The primary structure comprises 351 residues: N-acetyl-gamma-glutamyl-phosphate reductase (351 aa).

The active site involves Cys150.

Belongs to the NAGSA dehydrogenase family. Type 1 subfamily.

The protein localises to the cytoplasm. It catalyses the reaction N-acetyl-L-glutamate 5-semialdehyde + phosphate + NADP(+) = N-acetyl-L-glutamyl 5-phosphate + NADPH + H(+). Its pathway is amino-acid biosynthesis; L-arginine biosynthesis; N(2)-acetyl-L-ornithine from L-glutamate: step 3/4. Catalyzes the NADPH-dependent reduction of N-acetyl-5-glutamyl phosphate to yield N-acetyl-L-glutamate 5-semialdehyde. This is N-acetyl-gamma-glutamyl-phosphate reductase from Heliobacterium modesticaldum (strain ATCC 51547 / Ice1).